The primary structure comprises 178 residues: Small ribosomal subunit protein uS4 (178 aa).

In terms of domain architecture, S4 RNA-binding spans 104–166 (RRLQTMVYKK…PNSPMASENH (63 aa)). The disordered stretch occupies residues 157-178 (PNSPMASENHPERTAAVSEENQ).

It belongs to the universal ribosomal protein uS4 family. As to quaternary structure, part of the 30S ribosomal subunit. Contacts protein S5. The interaction surface between S4 and S5 is involved in control of translational fidelity.

One of the primary rRNA binding proteins, it binds directly to 16S rRNA where it nucleates assembly of the body of the 30S subunit. Functionally, with S5 and S12 plays an important role in translational accuracy. The sequence is that of Small ribosomal subunit protein uS4 from Methanococcus maripaludis (strain C7 / ATCC BAA-1331).